We begin with the raw amino-acid sequence, 304 residues long: Acetylglutamate kinase (304 aa).

Substrate is bound by residues 72-73, arginine 94, and asparagine 199; that span reads GG.

The protein belongs to the acetylglutamate kinase family. ArgB subfamily.

Its subcellular location is the cytoplasm. It carries out the reaction N-acetyl-L-glutamate + ATP = N-acetyl-L-glutamyl 5-phosphate + ADP. It functions in the pathway amino-acid biosynthesis; L-arginine biosynthesis; N(2)-acetyl-L-ornithine from L-glutamate: step 2/4. Its function is as follows. Catalyzes the ATP-dependent phosphorylation of N-acetyl-L-glutamate. This is Acetylglutamate kinase from Methylobacterium nodulans (strain LMG 21967 / CNCM I-2342 / ORS 2060).